The primary structure comprises 105 residues: Small ribosomal subunit protein uS10 (105 aa).

This sequence belongs to the universal ribosomal protein uS10 family. In terms of assembly, part of the 30S ribosomal subunit.

Its function is as follows. Involved in the binding of tRNA to the ribosomes. This is Small ribosomal subunit protein uS10 from Picosynechococcus sp. (strain ATCC 27264 / PCC 7002 / PR-6) (Agmenellum quadruplicatum).